We begin with the raw amino-acid sequence, 1000 residues long: Integrin alpha-PS5 (1000 aa).

FG-GAP repeat units lie at residues 15 to 74, 75 to 137, 145 to 198, 199 to 261, 262 to 323, 324 to 379, and 386 to 448; these read KHLK…GSCS, HYVL…DTPP, SLIP…AAQG, SYAV…GEIV, RKLH…FKFE, KKII…GLRD, and DAPS…SESR. N-linked (GlcNAc...) asparagine glycosylation is present at N58. The N-linked (GlcNAc...) asparagine glycan is linked to N231. Residues N516, N592, N622, N732, N771, N829, N842, N853, and N922 are each glycosylated (N-linked (GlcNAc...) asparagine). Residues 930-950 form a helical membrane-spanning segment; the sequence is IWYIILSLIAGHLLLGAMTYI. Topologically, residues 951–1000 are cytoplasmic; that stretch reads LYKLRFFKRGKKEELKRLLEEHRSETKEPATDCEGNQEEINVEMHSDLEN. The segment covering 971–980 has biased composition (basic and acidic residues); it reads EHRSETKEPA. The interval 971-1000 is disordered; sequence EHRSETKEPATDCEGNQEEINVEMHSDLEN.

It belongs to the integrin alpha chain family. As to quaternary structure, heterodimer of an alpha and a beta subunit. Alpha-PS5 associates with beta-PS. In terms of tissue distribution, expressed in all follicle cells overlying the oocyte during mid-oogenesis, the strongest expression is observed in the cells covering the anterior end of the oocyte and in the cells forming the dorsal appendages. After completion of oocyte enlargement, expression in main body follicle cells is down-regulated but persists strongly in the dorsal appendage forming cells. Expressed in lamellocytes.

It localises to the membrane. Functionally, possible role in cell-cell interactions. Minor involvement in the establishment of the oocyte anterior-posterior length. This Drosophila melanogaster (Fruit fly) protein is Integrin alpha-PS5.